The primary structure comprises 459 residues: Xylose/arabinose-binding protein XacG (459 aa).

A helical membrane pass occupies residues 19-36 (ALTVGAAAGIAGCTGGGG). The tract at residues 27–68 (GIAGCTGGGGTETESTESGNGNGSGGSTDDTETSGSSSGESW) is disordered.

Belongs to the bacterial solute-binding protein 1 family. As to quaternary structure, the complex is composed of two ATP-binding proteins (XacJ and XacK), two transmembrane proteins (XacH and XacI) and a solute-binding protein (XacG).

It localises to the cell membrane. Functionally, part of the ABC transporter complex XacGHIJK involved in the uptake of xylose and arabinose. The sequence is that of Xylose/arabinose-binding protein XacG from Haloferax volcanii (strain ATCC 29605 / DSM 3757 / JCM 8879 / NBRC 14742 / NCIMB 2012 / VKM B-1768 / DS2) (Halobacterium volcanii).